A 46-amino-acid polypeptide reads, in one-letter code: TGAQSLSIVAPLDVLRQRLMNELNRRRMRELQGSRIQQNRQLLTSI.

I46 bears the Isoleucine amide mark.

It belongs to the sauvagine/corticotropin-releasing factor/urotensin I family.

Its subcellular location is the secreted. In terms of biological role, regulation of fluid secretion. Stimulates primary urine secretion by Malpighian tubules and causes a dose-dependent stimulation of cAMP levels in the tubules. This is Diuretic hormone from Acheta domesticus (House cricket).